The primary structure comprises 303 residues: N-acetyl-D-glucosamine kinase (303 aa).

ATP-binding positions include 4 to 11 (GFDIGGTK) and 133 to 140 (GVGGGLVL). Positions 157, 177, 179, and 184 each coordinate Zn(2+).

It belongs to the ROK (NagC/XylR) family. NagK subfamily.

It carries out the reaction N-acetyl-D-glucosamine + ATP = N-acetyl-D-glucosamine 6-phosphate + ADP + H(+). Its pathway is cell wall biogenesis; peptidoglycan recycling. Its function is as follows. Catalyzes the phosphorylation of N-acetyl-D-glucosamine (GlcNAc) derived from cell-wall degradation, yielding GlcNAc-6-P. The polypeptide is N-acetyl-D-glucosamine kinase (Salmonella choleraesuis (strain SC-B67)).